The sequence spans 440 residues: MSYNYFGKKILILGMGLTGISCINFFLKKGIKPKIIDESKHPSNFIKIPQNIEYSLGSLDHQWILESDLIVISPGISSFKPILIKARLLGIEIISDIELFSREVTCPIISITGTNGKSTVATMIEKIAKKSGYKAFLGGNIGVPVLEILDKEADLYIIELSSFQLENTFNLKSKIAVILNISEDHINRYPNGFQQYKNTKLSVYNQAEICIINSNDKIEKSLIHSKNKKWISFGTNRSDYRICSKSNDPILFFKNKKILNTSEILLYGYHNYNNILVSLAISDAMQFPRNDAINVLKSFSNLPHRFQIIKNEKGVRWINDSKSTNVNSTQVALNSIKTTGTIRLLLGGDSKSANFNILKNIFRTLKIKIYCFGRDGIKLSKICEKKSIYVENLKKAVILISKQVKSGDTVLLSPGCSSLGQFSNFEERGNLFIKLIKEIT.

Position 113-119 (113-119) interacts with ATP; that stretch reads GTNGKST.

This sequence belongs to the MurCDEF family.

The protein resides in the cytoplasm. The catalysed reaction is UDP-N-acetyl-alpha-D-muramoyl-L-alanine + D-glutamate + ATP = UDP-N-acetyl-alpha-D-muramoyl-L-alanyl-D-glutamate + ADP + phosphate + H(+). It participates in cell wall biogenesis; peptidoglycan biosynthesis. Its function is as follows. Cell wall formation. Catalyzes the addition of glutamate to the nucleotide precursor UDP-N-acetylmuramoyl-L-alanine (UMA). The sequence is that of UDP-N-acetylmuramoylalanine--D-glutamate ligase (murD) from Buchnera aphidicola subsp. Acyrthosiphon pisum (strain APS) (Acyrthosiphon pisum symbiotic bacterium).